Consider the following 469-residue polypeptide: Neuraminidase (469 aa).

The Intravirion portion of the chain corresponds to M1–K6. The chain crosses the membrane as a helical span at residues I7–L29. Residues G11 to T33 are involved in apical transport and lipid raft association. Over I30 to K469 the chain is Virion surface. Residues H36–S88 are hypervariable stalk region. Residues N57, N66, and N72 are each glycosylated (N-linked (GlcNAc...) asparagine; by host). The segment at L91 to K469 is head of neuraminidase. 8 cysteine pairs are disulfide-bonded: C92/C416, C124/C129, C184/C231, C233/C238, C280/C292, C282/C290, C318/C336, and C420/C447. R118 contacts substrate. N-linked (GlcNAc...) asparagine; by host glycosylation occurs at N146. D151 (proton donor/acceptor) is an active-site residue. R152 is a substrate binding site. Residue E278–E279 coordinates substrate. Position 293 (R293) interacts with substrate. 2 residues coordinate Ca(2+): D294 and G298. N308 carries N-linked (GlcNAc...) asparagine; by host glycosylation. D324 is a Ca(2+) binding site. R370 serves as a coordination point for substrate. Y405 acts as the Nucleophile in catalysis.

It belongs to the glycosyl hydrolase 34 family. As to quaternary structure, homotetramer. The cofactor is Ca(2+). In terms of processing, N-glycosylated.

It localises to the virion membrane. The protein localises to the host apical cell membrane. It carries out the reaction Hydrolysis of alpha-(2-&gt;3)-, alpha-(2-&gt;6)-, alpha-(2-&gt;8)- glycosidic linkages of terminal sialic acid residues in oligosaccharides, glycoproteins, glycolipids, colominic acid and synthetic substrates.. Its activity is regulated as follows. Inhibited by the neuraminidase inhibitors zanamivir (Relenza) and oseltamivir (Tamiflu). These drugs interfere with the release of progeny virus from infected cells and are effective against all influenza strains. Resistance to neuraminidase inhibitors is quite rare. In terms of biological role, catalyzes the removal of terminal sialic acid residues from viral and cellular glycoconjugates. Cleaves off the terminal sialic acids on the glycosylated HA during virus budding to facilitate virus release. Additionally helps virus spread through the circulation by further removing sialic acids from the cell surface. These cleavages prevent self-aggregation and ensure the efficient spread of the progeny virus from cell to cell. Otherwise, infection would be limited to one round of replication. Described as a receptor-destroying enzyme because it cleaves a terminal sialic acid from the cellular receptors. May facilitate viral invasion of the upper airways by cleaving the sialic acid moieties on the mucin of the airway epithelial cells. Likely to plays a role in the budding process through its association with lipid rafts during intracellular transport. May additionally display a raft-association independent effect on budding. Plays a role in the determination of host range restriction on replication and virulence. Sialidase activity in late endosome/lysosome traffic seems to enhance virus replication. This Aves protein is Neuraminidase.